Reading from the N-terminus, the 360-residue chain is Archaemetzincin-2 (360 aa).

A Zn(2+)-binding site is contributed by histidine 254. Glutamate 255 acts as the Proton acceptor in catalysis. Residues histidine 258, histidine 264, cysteine 265, cysteine 270, cysteine 289, and cysteine 292 each coordinate Zn(2+).

Belongs to the peptidase M54 family. Requires Zn(2+) as cofactor.

Its function is as follows. Probable zinc metalloprotease. The sequence is that of Archaemetzincin-2 (AMZ2) from Macaca fascicularis (Crab-eating macaque).